A 141-amino-acid chain; its full sequence is Large ribosomal subunit protein uL11c (141 aa).

The protein belongs to the universal ribosomal protein uL11 family. Part of the ribosomal stalk of the 50S ribosomal subunit. Interacts with L10 and the large rRNA to form the base of the stalk. L10 forms an elongated spine to which L12 dimers bind in a sequential fashion forming a multimeric L10(L12)X complex.

The protein localises to the plastid. The protein resides in the cyanelle. Its function is as follows. Forms part of the ribosomal stalk which helps the ribosome interact with GTP-bound translation factors. The polypeptide is Large ribosomal subunit protein uL11c (Cyanophora paradoxa).